We begin with the raw amino-acid sequence, 311 residues long: MNETLSGVVTRVTGATYIVETGDGPKVRCRTVPSTVSENEGSNLVAVGDRVEFRPKASETEMAEGVIVRVEERRSVLERRREVRRNRSKEKEQVIAANIDQIVLITSFDDPPFNSRLVDRYLVFAESEHLPLLIVVNKIDLDEEGMVEEDLEVYRNLDCNICLVSAEDGRGIEELRELLRDRLSAFSGHSGVGKSTLINLLVGREELRTAETSGKTGKGVHTTTSSAMFQLPGGGYVIDTPGIREFNLAGITRENLRFYYTEFLRFMPECAFSSCSHTVEPGCAVIAAVESGRIDAERYESYLALLDSLDE.

Positions 88–246 (SKEKEQVIAA…VIDTPGIREF (159 aa)) constitute a CP-type G domain. Residues 137 to 140 (NKID) and 188 to 196 (GHSGVGKST) each bind GTP. Positions 270, 275, 277, and 283 each coordinate Zn(2+).

This sequence belongs to the TRAFAC class YlqF/YawG GTPase family. RsgA subfamily. In terms of assembly, monomer. Associates with 30S ribosomal subunit, binds 16S rRNA. The cofactor is Zn(2+).

Its subcellular location is the cytoplasm. Functionally, one of several proteins that assist in the late maturation steps of the functional core of the 30S ribosomal subunit. Helps release RbfA from mature subunits. May play a role in the assembly of ribosomal proteins into the subunit. Circularly permuted GTPase that catalyzes slow GTP hydrolysis, GTPase activity is stimulated by the 30S ribosomal subunit. This Chlorobaculum parvum (strain DSM 263 / NCIMB 8327) (Chlorobium vibrioforme subsp. thiosulfatophilum) protein is Small ribosomal subunit biogenesis GTPase RsgA.